Reading from the N-terminus, the 103-residue chain is Cell division suppressor protein YneA (103 aa).

The LysM domain occupies 36-87 (VKIEVQEGDTLWELADRIKGGKTADKHKFIEWVADKNNLPTSVIKPGDVLIL).

This sequence belongs to the YneA family.

It localises to the cytoplasm. In terms of biological role, inhibits cell division during the SOS response. Affects a later stage of the cell division protein assembly, after the assembly of the Z ring, by probably suppressing recruitment of FtsL and/or DivIC to the division machinery. In Bacillus licheniformis (strain ATCC 14580 / DSM 13 / JCM 2505 / CCUG 7422 / NBRC 12200 / NCIMB 9375 / NCTC 10341 / NRRL NRS-1264 / Gibson 46), this protein is Cell division suppressor protein YneA.